Here is a 301-residue protein sequence, read N- to C-terminus: Haloalkane dehalogenase (301 aa).

The active-site Nucleophile is the Asp-123. The active-site Proton donor is the Asp-250. Catalysis depends on His-279, which acts as the Proton acceptor.

The protein belongs to the haloalkane dehalogenase family. Type 1 subfamily. As to quaternary structure, monomer.

The catalysed reaction is 1-haloalkane + H2O = a halide anion + a primary alcohol + H(+). Its function is as follows. Catalyzes hydrolytic cleavage of carbon-halogen bonds in halogenated aliphatic compounds, leading to the formation of the corresponding primary alcohols, halide ions and protons. This Phenylobacterium zucineum (strain HLK1) protein is Haloalkane dehalogenase.